Consider the following 145-residue polypeptide: Ornithine decarboxylase antizyme (145 aa).

It belongs to the ODC antizyme family. Interacts with ODC1 and thereby sterically blocks ODC homodimerization.

Its function is as follows. Ornithine decarboxylase (ODC) antizyme protein that negatively regulates ODC activity and intracellular polyamine biosynthesis and uptake in response to increased intracellular polyamine levels. Binds to ODC monomers, inhibiting the assembly of the functional ODC homodimer, and targets the monomers for ubiquitin-independent proteolytic destruction by the 26S proteasome. The chain is Ornithine decarboxylase antizyme from Onchocerca volvulus.